The chain runs to 650 residues: Pentatricopeptide repeat-containing protein At2g41080 (650 aa).

12 PPR repeats span residues 43 to 77, 78 to 112, 114 to 139, 140 to 174, 175 to 209, 210 to 240, 241 to 275, 276 to 310, 311 to 341, 342 to 372, 378 to 413, and 414 to 444; these read NTSL…GFSS, DKFI…NYMS, NILI…MPDR, KLTT…GFSP, DEYT…GLEL, DLVV…MPVR, NLVA…GCRP, NKIT…GASS, VVAV…REDE, DEVM…MAEQ, NEVA…GFKP, and GLKH…MPIK. The tract at residues 449 to 524 is type E motif; that stretch reads IWKTLLSACN…EAGISWFEHK (76 aa). Residues 525–555 are type E(+) motif; it reads GEVHQFKMGDRSQSKSKEIYSYLKELTLEMK. The type DYW motif stretch occupies residues 556–650; it reads LKGYKPDTAS…NGKCSCGDYW (95 aa).

Belongs to the PPR family. PCMP-H subfamily.

The chain is Pentatricopeptide repeat-containing protein At2g41080 (PCMP-H29) from Arabidopsis thaliana (Mouse-ear cress).